Reading from the N-terminus, the 253-residue chain is PAXIP1-associated glutamate-rich protein 1A (253 aa).

Disordered regions lie at residues 1-108 (MSLA…MPPP) and 126-253 (LQAE…QRKY). Residues 45-66 (KAEEEGKGSQEEAGREGSRPEE) are compositionally biased toward basic and acidic residues. The segment at 115-159 (YELLATQGTLELQAEILPRRPPTPEAQSEEERSDEEPEAKEEEEE) is sufficient for interaction with NCOA1. Position 137 is a phosphothreonine (threonine 137). Positions 141-158 (QSEEERSDEEPEAKEEEE) are enriched in acidic residues. Residues serine 142 and serine 147 each carry the phosphoserine modification. Residues 160–253 (KPHMPTEFDF…NSLFPRQRKY (94 aa)) form a sufficient for interaction with ESR1 region. The segment covering 194 to 222 (QKREARLDKVLSDMKRHKKLEEQILRTGR) has biased composition (basic and acidic residues). Serine 236 carries the phosphoserine modification. Residues 238 to 247 (PLRSSGNSLF) show a composition bias toward polar residues.

Component of the KMT2 family MLL2/MLL3 complex, at least composed of the histone methyltransferases KMT2D and/or KMT2C, the common subunits ASH2L, RBBP5, WDR5 and DPY30, and the complex type-specific subunits PAXIP1/PTIP, PAGR1, NCOA6 and KDM6A; PAXIP1 is required for the association with the MLL2/MLL3 complex. Forms a constitutive complex with PAXIP1/PTIP independently of the MLL2/MLL3 complex. Interacts with NCOA1, ESR1, NR3C1, AR.

Its subcellular location is the nucleus. In terms of biological role, its association with the histone methyltransferase MLL2/MLL3 complex is suggesting a role in epigenetic transcriptional activation. However, in association with PAXIP1/PTIP is proposed to function at least in part independently of the MLL2/MLL3 complex. Proposed to be recruited by PAXIP1 to sites of DNA damage where the PAGR1:PAXIP1 complex is required for cell survival in response to DNA damage independently of the MLL2/MLL3 complex. However, its function in DNA damage has been questioned. During immunoglobulin class switching in activated B-cells is involved in transcription regulation of downstream switch regions at the immunoglobulin heavy-chain (Igh) locus independently of the MLL2/MLL3 complex. Involved in both estrogen receptor-regulated gene transcription and estrogen-stimulated G1/S cell-cycle transition. Acts as a transcriptional cofactor for nuclear hormone receptors. Inhibits the induction properties of several steroid receptors such as NR3C1, AR and PPARG; the mechanism of inhibition appears to be gene-dependent. May be involved in the regulation of the BMP pathway in extraembryonic development. This Mus musculus (Mouse) protein is PAXIP1-associated glutamate-rich protein 1A.